We begin with the raw amino-acid sequence, 87 residues long: Small polypeptide ROTUNDIFOLIA LIKE 2 (87 aa).

The chain crosses the membrane as a helical span at residues 19–35; sequence LIPHTSHYILQLVYLHL. The segment at 56–87 is required for DVL/RTFL small polypeptide activity; sequence GQMGRLNRAFREKRARFYIFRRCVIMLLRWSD.

Belongs to the DVL/RTFL small polypeptides family.

The protein localises to the cell membrane. Functionally, small polypeptide acting as a regulatory molecule which coordinates cellular responses required for differentiation, growth and development, probably by restricting polar cell proliferation in lateral organs. The polypeptide is Small polypeptide ROTUNDIFOLIA LIKE 2 (Oryza sativa subsp. japonica (Rice)).